We begin with the raw amino-acid sequence, 400 residues long: Probable succinyl-diaminopimelate desuccinylase (400 aa).

His72 lines the Zn(2+) pocket. Asp74 is a catalytic residue. Asp105 is a binding site for Zn(2+). The Proton acceptor role is filled by Glu139. 3 residues coordinate Zn(2+): Glu140, Glu165, and His378.

Belongs to the peptidase M20A family. Zn(2+) is required as a cofactor. It depends on Co(2+) as a cofactor.

It carries out the reaction N-succinyl-(2S,6S)-2,6-diaminopimelate + H2O = (2S,6S)-2,6-diaminopimelate + succinate. Its pathway is amino-acid biosynthesis; L-lysine biosynthesis via DAP pathway; LL-2,6-diaminopimelate from (S)-tetrahydrodipicolinate (succinylase route): step 3/3. This Staphylococcus aureus (strain Mu50 / ATCC 700699) protein is Probable succinyl-diaminopimelate desuccinylase (dapE).